Here is a 432-residue protein sequence, read N- to C-terminus: Gamma-glutamyl phosphate reductase (432 aa).

It belongs to the gamma-glutamyl phosphate reductase family.

Its subcellular location is the cytoplasm. It catalyses the reaction L-glutamate 5-semialdehyde + phosphate + NADP(+) = L-glutamyl 5-phosphate + NADPH + H(+). It participates in amino-acid biosynthesis; L-proline biosynthesis; L-glutamate 5-semialdehyde from L-glutamate: step 2/2. Catalyzes the NADPH-dependent reduction of L-glutamate 5-phosphate into L-glutamate 5-semialdehyde and phosphate. The product spontaneously undergoes cyclization to form 1-pyrroline-5-carboxylate. In Methylorubrum extorquens (strain CM4 / NCIMB 13688) (Methylobacterium extorquens), this protein is Gamma-glutamyl phosphate reductase.